The sequence spans 423 residues: MKAEIIAVGTELLTGQVLNTNAQFLSEKMAEIGVDVFFQTAVGDNESRLLNLLDIASQRSDLILLCGGLGPTEDDLTKQTVASFLGKSLVFEPSASQKLDHFFASRPHYSRTPNNERQAQIIEGSTPIPNITGLAVGGILEVDGVTYVLLPGPPSELKPMVNQYLLPALSGNHTALYSRVLRFFGIGESQLVTILSEMIHKQSDPTIAPYAKIGEVTLRLSTKAETPEQAKAKLDGLEQKILQTPSFEGGLLADYHYGYGETNSLSAEVVNMLKERSMTITAAESLTAGLFQSTIADFPGSSKLFRGGFVTYHIEEKAKMLQLQLSDLELHGVVSAFTAKKMAEQSRHLTASDIGVGLTGVAGPDALEGHNVGTVFIGIATLKGAKSYKVSIGGRSRSDIRYIACLHAFDLVRKTLLNGLNLL.

The protein belongs to the CinA family.

The polypeptide is Putative competence-damage inducible protein (Streptococcus uberis (strain ATCC BAA-854 / 0140J)).